Consider the following 192-residue polypeptide: Chromophore lyase CpcS/CpeS 2 (192 aa).

This sequence belongs to the CpcS/CpeS biliprotein lyase family.

Covalently attaches a chromophore to Cys residue(s) of phycobiliproteins. In Synechocystis sp. (strain ATCC 27184 / PCC 6803 / Kazusa), this protein is Chromophore lyase CpcS/CpeS 2.